A 349-amino-acid polypeptide reads, in one-letter code: FK506-binding protein-like (349 aa).

The residue at position 3 (threonine 3) is a Phosphothreonine. Positions 36 to 55 are disordered; it reads RQQPRDPPTETLELEVSPDP. 3 TPR repeats span residues 210–243, 252–285, and 286–319; these read AREERARGTELFRAGNPEGAARCYGRALRLLLTL, TVLHANLAACQLLLGQPQLAAQSCDRVLEREPGH, and LKALYRRGVAQAALGNLEKATADLKKVLAIDPKN.

In terms of assembly, forms a ternary complex with CDKN1A/p21 and HSP90AB1/Hsp90. In terms of tissue distribution, ubiquitously expressed with higher levels in testis.

In terms of biological role, may be involved in response to X-ray. Regulates p21 protein stability by binding to Hsp90 and p21. The sequence is that of FK506-binding protein-like (FKBPL) from Homo sapiens (Human).